The primary structure comprises 340 residues: Solute carrier family 35 member G3 (340 aa).

Positions 11–33 (PDFTQPSPPSTPASLPSKHHHRC) are disordered. A run of 9 helical transmembrane segments spans residues 39–59 (TKGLFVALLGGGLSAGFVGPF), 69–89 (LPSLELLIFRCLFHLPIALLL), 107–127 (FLHAILNVLSIGCAYSAVQVV), 160–180 (AWCGLFGSTLGLIIIVGPGLG), 189–209 (LYTALGYVLAFLGGLALSLGL), 223–243 (TVAFLFGLVGLMVSVPGLFVL), 257–277 (CVVAVGLLALVSFVCVSYAVT), 283–303 (LVCAVLHSEVVVALMLQYYVL), and 307–327 (VAPSDIMGAGVVLGSIAIITA). The EamA 1 domain maps to 51 to 176 (LSAGFVGPFS…STLGLIIIVG (126 aa)). In terms of domain architecture, EamA 2 spans 274-327 (YAVTKAHPALVCAVLHSEVVVALMLQYYVLYETVAPSDIMGAGVVLGSIAIITA).

This sequence belongs to the SLC35G solute transporter family.

Its subcellular location is the membrane. In Mus musculus (Mouse), this protein is Solute carrier family 35 member G3 (Slc35g3).